Here is a 164-residue protein sequence, read N- to C-terminus: S-ribosylhomocysteine lyase (164 aa).

3 residues coordinate Fe cation: His54, His58, and Cys128.

The protein belongs to the LuxS family. As to quaternary structure, homodimer. It depends on Fe cation as a cofactor.

It catalyses the reaction S-(5-deoxy-D-ribos-5-yl)-L-homocysteine = (S)-4,5-dihydroxypentane-2,3-dione + L-homocysteine. Involved in the synthesis of autoinducer 2 (AI-2) which is secreted by bacteria and is used to communicate both the cell density and the metabolic potential of the environment. The regulation of gene expression in response to changes in cell density is called quorum sensing. Catalyzes the transformation of S-ribosylhomocysteine (RHC) to homocysteine (HC) and 4,5-dihydroxy-2,3-pentadione (DPD). This chain is S-ribosylhomocysteine lyase, found in Campylobacter jejuni subsp. jejuni serotype O:2 (strain ATCC 700819 / NCTC 11168).